Here is a 101-residue protein sequence, read N- to C-terminus: Ubiquitin-related modifier 1 homolog (101 aa).

G101 carries the 1-thioglycine modification. G101 is covalently cross-linked (Glycyl lysine isopeptide (Gly-Lys) (interchain with K-? in acceptor proteins)).

Belongs to the URM1 family. In terms of assembly, interacts with cer. Post-translationally, C-terminal thiocarboxylation occurs in 2 steps, it is first acyl-adenylated (-COAMP) via the hesA/moeB/thiF part of the MOCS3 homolog, then thiocarboxylated (-COSH) via the rhodanese domain of the MOCS3 homolog.

Its subcellular location is the cytoplasm. Its pathway is tRNA modification; 5-methoxycarbonylmethyl-2-thiouridine-tRNA biosynthesis. In terms of biological role, acts as a sulfur carrier required for 2-thiolation of mcm(5)S(2)U at tRNA wobble positions of cytosolic tRNA(Lys), tRNA(Glu) and tRNA(Gln). Serves as sulfur donor in tRNA 2-thiolation reaction by being thiocarboxylated (-COSH) at its C-terminus by MOCS3. The sulfur is then transferred to tRNA to form 2-thiolation of mcm(5)S(2)U. Also acts as a ubiquitin-like protein (UBL) that is covalently conjugated via an isopeptide bond to lysine residues of target proteins such as Prx2/Jafrac1, Ciao1, Eip71CD and GILT1. The thiocarboxylated form serves as substrate for conjugation and oxidative stress specifically induces the formation of UBL-protein conjugates. The protein is Ubiquitin-related modifier 1 homolog of Drosophila yakuba (Fruit fly).